We begin with the raw amino-acid sequence, 234 residues long: Synaptogyrin-1 (234 aa).

An N-acetylmethionine modification is found at M1. Residues 1-23 lie on the Cytoplasmic side of the membrane; the sequence is MEGGAYGAGKAGGAFDPYTLVRQ. One can recognise an MARVEL domain in the interval 20–173; it reads LVRQPHTILR…QAVLAFQRYQ (154 aa). A helical transmembrane segment spans residues 24-44; sequence PHTILRVVSWVFSIVVFGSIV. Residues 45–71 lie on the Lumenal side of the membrane; the sequence is NEGYLNNPEEEEEFCIYNRNPNACSYG. A helical transmembrane segment spans residues 72-92; the sequence is VTVGVLAFLTCLVYLALDVYF. Residues 93-104 are Cytoplasmic-facing; that stretch reads PQISSVKDRKKA. Residues 105 to 125 traverse the membrane as a helical segment; it reads VLSDIGVSAFWAFFWFVGFCF. Residues 126–148 lie on the Lumenal side of the membrane; that stretch reads LANQWQVSKPKDNPLNEGTDAAR. The helical transmembrane segment at 149-169 threads the bilayer; sequence AAIAFSFFSIFTWAGQAVLAF. At 170 to 234 the chain is on the cytoplasmic side; the sequence is QRYQIGADSA…EPQGYQSQGY (65 aa). The disordered stretch occupies residues 201 to 234; it reads EPSAGSDPTGMGGTYQHPANAFDAEPQGYQSQGY.

This sequence belongs to the synaptogyrin family. As to expression, nervous system (at protein level).

It localises to the cytoplasmic vesicle. Its subcellular location is the secretory vesicle. The protein localises to the synaptic vesicle membrane. The protein resides in the melanosome. Its function is as follows. May play a role in regulated exocytosis. Modulates the localization of synaptophysin/SYP into synaptic-like microvesicles and may therefore play a role in synaptic-like microvesicle formation and/or maturation. Involved in the regulation of short-term and long-term synaptic plasticity. The chain is Synaptogyrin-1 from Rattus norvegicus (Rat).